Consider the following 643-residue polypeptide: Nicastrin (643 aa).

The signal sequence occupies residues 1 to 20 (MRFKNVLVLLLLLVFSVINS). Residues 21–611 (EPSAPATISD…VFKIGNSTTE (591 aa)) are Extracellular-facing. Cys42 and Cys54 are disulfide-bonded. Asn96 and Asn166 each carry an N-linked (GlcNAc...) asparagine glycan. 2 disulfide bridges follow: Cys204–Cys210 and Cys308–Cys318. N-linked (GlcNAc...) asparagine glycosylation is found at Asn333 and Asn385. 3 disulfide bridges follow: Cys479/Cys486, Cys540/Cys551, and Cys546/Cys556. Asn584 is a glycosylation site (N-linked (GlcNAc...) asparagine). Residues 612–632 (IWFLVSGLIELLVSIGLILYV) traverse the membrane as a helical segment. Over 633–643 (KKFLSNRYKLL) the chain is Cytoplasmic.

The protein belongs to the nicastrin family. As to quaternary structure, component of the gamma-secretase complex, a complex composed of a presenilin homodimer, nicastrin, aph1 and pen2.

The protein localises to the membrane. Essential subunit of the gamma-secretase complex, an endoprotease complex that catalyzes the intramembrane cleavage of integral membrane proteins such as Notch receptors and APP (amyloid-beta precursor protein). The chain is Nicastrin from Dictyostelium purpureum (Slime mold).